The following is a 248-amino-acid chain: 14-3-3-like protein G-BOX factor 14 kappa (248 aa).

Phosphoserine is present on residues S70, S112, and S193. Position 214 is a phosphothreonine (T214).

The protein belongs to the 14-3-3 family. In terms of assembly, interacts with the isocitrate dehydrogenase IDH3, and malate dehydrogenases MDH1 and MDH2. Interacts with CINV1.

Its subcellular location is the nucleus. The protein resides in the cytoplasm. Its function is as follows. Is associated with a DNA binding complex that binds to the G box, a well-characterized cis-acting DNA regulatory element found in plant genes. Involved in the regulation of nutrient metabolism. Negative regulator of freezing tolerance that modulates cold-responsive C-repeat-binding factors (CBF) DREB1A AND DREB1B proteins stability by facilitating their ubiquitin-mediated degradation; this processus is counteracted by B1L. This Arabidopsis thaliana (Mouse-ear cress) protein is 14-3-3-like protein G-BOX factor 14 kappa.